Consider the following 366-residue polypeptide: uncharacterized protein (366 aa).

The protein to B.subtilis XkdV.

This is an uncharacterized protein from Bacillus subtilis (strain 168).